Reading from the N-terminus, the 425-residue chain is UPF0597 protein VFMJ11_0655 (425 aa).

It belongs to the UPF0597 family.

The chain is UPF0597 protein VFMJ11_0655 from Aliivibrio fischeri (strain MJ11) (Vibrio fischeri).